The primary structure comprises 276 residues: NH(3)-dependent NAD(+) synthetase (276 aa).

43–50 is a binding site for ATP; it reads GISGGVDS. Asp-49 serves as a coordination point for Mg(2+). A deamido-NAD(+)-binding site is contributed by Arg-146. An ATP-binding site is contributed by Thr-166. A Mg(2+)-binding site is contributed by Glu-171. The deamido-NAD(+) site is built by Lys-179 and Asp-186. Residues Lys-195 and Thr-217 each coordinate ATP. 266–267 provides a ligand contact to deamido-NAD(+); it reads HK.

It belongs to the NAD synthetase family. Homodimer.

It carries out the reaction deamido-NAD(+) + NH4(+) + ATP = AMP + diphosphate + NAD(+) + H(+). It functions in the pathway cofactor biosynthesis; NAD(+) biosynthesis; NAD(+) from deamido-NAD(+) (ammonia route): step 1/1. In terms of biological role, catalyzes the ATP-dependent amidation of deamido-NAD to form NAD. Uses ammonia as a nitrogen source. This is NH(3)-dependent NAD(+) synthetase from Shewanella piezotolerans (strain WP3 / JCM 13877).